Here is a 502-residue protein sequence, read N- to C-terminus: Maturase K (502 aa).

This sequence belongs to the intron maturase 2 family. MatK subfamily.

The protein resides in the plastid. It localises to the chloroplast. Functionally, usually encoded in the trnK tRNA gene intron. Probably assists in splicing its own and other chloroplast group II introns. This is Maturase K from Vaccinium vitis-idaea (Mountain cranberry).